The sequence spans 288 residues: Ribosomal RNA small subunit methyltransferase A (288 aa).

Positions 37, 39, 64, 86, 112, and 131 each coordinate S-adenosyl-L-methionine.

The protein belongs to the class I-like SAM-binding methyltransferase superfamily. rRNA adenine N(6)-methyltransferase family. RsmA subfamily.

It is found in the cytoplasm. It carries out the reaction adenosine(1518)/adenosine(1519) in 16S rRNA + 4 S-adenosyl-L-methionine = N(6)-dimethyladenosine(1518)/N(6)-dimethyladenosine(1519) in 16S rRNA + 4 S-adenosyl-L-homocysteine + 4 H(+). Functionally, specifically dimethylates two adjacent adenosines (A1518 and A1519) in the loop of a conserved hairpin near the 3'-end of 16S rRNA in the 30S particle. May play a critical role in biogenesis of 30S subunits. The chain is Ribosomal RNA small subunit methyltransferase A from Rhodospirillum rubrum (strain ATCC 11170 / ATH 1.1.1 / DSM 467 / LMG 4362 / NCIMB 8255 / S1).